Here is a 185-residue protein sequence, read N- to C-terminus: MINDIINDSKSRMEKSLGSLKTELAKLRTGRAHPSLLEHIKVDYYNVETPLSQVASIAIENPRTLSITPWEKNMVGPIEKAIQKADLGLNPATVGMVIRVPLPPLTEERRKELARVVREEAEHARVAIRNIRREANNDLKELMKEKEISEDEERRAQTAIQKLTDAQIAEVDKMASQKEADLMAV.

This sequence belongs to the RRF family.

Its subcellular location is the cytoplasm. Its function is as follows. Responsible for the release of ribosomes from messenger RNA at the termination of protein biosynthesis. May increase the efficiency of translation by recycling ribosomes from one round of translation to another. This chain is Ribosome-recycling factor, found in Coxiella burnetii (strain CbuK_Q154) (Coxiella burnetii (strain Q154)).